The primary structure comprises 554 residues: Methyl-coenzyme M reductase II subunit alpha (554 aa).

Gln-151 lines the coenzyme F430 pocket. Residues Arg-229, 260-261 (KH), and Arg-274 contribute to the coenzyme B site. Coenzyme M-binding residues include Tyr-336 and Tyr-447.

The protein belongs to the methyl-coenzyme M reductase alpha subunit family. As to quaternary structure, MCR is a hexamer of two alpha, two beta, and two gamma chains, forming a dimer of heterotrimers. Coenzyme F430 serves as cofactor.

The enzyme catalyses coenzyme B + methyl-coenzyme M = methane + coenzyme M-coenzyme B heterodisulfide. Its pathway is one-carbon metabolism; methyl-coenzyme M reduction; methane from methyl-coenzyme M: step 1/1. Its function is as follows. Component of the methyl-coenzyme M reductase (MCR) I that catalyzes the reductive cleavage of methyl-coenzyme M (CoM-S-CH3 or 2-(methylthio)ethanesulfonate) using coenzyme B (CoB or 7-mercaptoheptanoylthreonine phosphate) as reductant which results in the production of methane and the mixed heterodisulfide of CoB and CoM (CoM-S-S-CoB). This is the final step in methanogenesis. The protein is Methyl-coenzyme M reductase II subunit alpha (mrtA) of Methanothermus fervidus (strain ATCC 43054 / DSM 2088 / JCM 10308 / V24 S).